The primary structure comprises 1521 residues: Suppressor of Ty 6 homolog (1521 aa).

Positions 1–204 (MDFIDNQAEE…EGAEDDARDV (204 aa)) are disordered. The segment covering 26 to 41 (KKMKMAKDKLKKKKKV) has biased composition (basic residues). The short motif at 26-42 (KKMKMAKDKLKKKKKVV) is the Nuclear localization signal element. Acidic residues-rich tracts occupy residues 45-56 (SDEDEDDEDDEE) and 67-76 (ADEDDEEEDA). Residues 77–89 (RSEKSDRSRRSEI) show a composition bias toward basic and acidic residues. Residues 90–103 (NDELDDEDLDLIDE) are compositionally biased toward acidic residues. The segment covering 127–149 (PIRRSNQDDDDLQSERGSDDGDK) has biased composition (basic and acidic residues). Over residues 167–177 (RSEDDFIEDDG) the composition is skewed to acidic residues. The 70-residue stretch at 1182–1251 (LNAGRPGGCV…EKFSILLSCK (70 aa)) folds into the S1 motif domain. The region spanning 1299-1388 (HPNFHNVSYE…IARFVLPMIQ (90 aa)) is the SH2 domain. Residues 1490-1521 (GIRSSLSYRPTGRTGPPPSAPYQQPPQQQYYR) are disordered. Over residues 1504-1513 (GPPPSAPYQQ) the composition is skewed to pro residues.

This sequence belongs to the SPT6 family. In terms of assembly, interacts with glp-1 and lin-12.

It localises to the nucleus. Histone H3-H4 chaperone that plays a role in maintenance of chromatin structure during RNA polymerase II transcription elongation. May be required for several aspects of morphogenesis of C.briggsae, including regulation of division in the germline and gut and specification of ventral-uterine precursor cell fate. The sequence is that of Suppressor of Ty 6 homolog (emb-5) from Caenorhabditis briggsae.